Consider the following 337-residue polypeptide: Cysteinyl leukotriene receptor 1 (337 aa).

At 1–28 the chain is on the extracellular side; that stretch reads MDETGNLTVSSATCHDTIDDFRNQVYST. A glycan (N-linked (GlcNAc...) asparagine) is linked at Asn6. A helical transmembrane segment spans residues 29–49; sequence LYSMISVVGFFGNGFVLYVLI. The Cytoplasmic segment spans residues 50 to 57; that stretch reads KTYHKKSA. A helical transmembrane segment spans residues 58-78; sequence FQVYMINLAVADLLCVCTLPL. At 79–106 the chain is on the extracellular side; the sequence is RVVYYVHKGIWLFGDFLCRLSTYALYVN. Residues Cys96 and Cys173 are joined by a disulfide bond. A helical transmembrane segment spans residues 107 to 127; it reads LYCSIFFMTAMSFFRCIAIVF. At 128 to 141 the chain is on the cytoplasmic side; sequence PVQNINLVTQKKAR. A helical transmembrane segment spans residues 142–162; sequence FVCVGIWIFVILTSSPFLMAK. The Extracellular segment spans residues 163–193; it reads PQKDEKNNTKCFEPPQDNQTKNHVLVLHYVS. Residues Asn169 and Asn180 are each glycosylated (N-linked (GlcNAc...) asparagine). A helical membrane pass occupies residues 194 to 214; the sequence is LFVGFIIPFVIIIVCYTMIIL. At 215–230 the chain is on the cytoplasmic side; the sequence is TLLKKSMKKNLSSHKK. A helical transmembrane segment spans residues 231 to 251; it reads AIGMIMVVTAAFLVSFMPYHI. At 252–276 the chain is on the extracellular side; it reads QRTIHLHFLHNETKPCDSVLRMQKS. An N-linked (GlcNAc...) asparagine glycan is attached at Asn262. The chain crosses the membrane as a helical span at residues 277 to 297; sequence VVITLSLAASNCCFDPLLYFF. Residues 298–337 are Cytoplasmic-facing; sequence SGGNFRKRLSTFRKHSLSSVTYVPRKKASLPEKGEEICKV.

Belongs to the G-protein coupled receptor 1 family. As to expression, widely expressed, with highest levels in spleen and peripheral blood leukocytes. Lower expression in several tissues, such as lung (mostly in smooth muscle bundles and alveolar macrophages), placenta, small intestine, pancreas, colon and heart.

The protein resides in the cell membrane. In terms of biological role, receptor for cysteinyl leukotrienes mediating bronchoconstriction of individuals with and without asthma. Stimulation by LTD4 results in the contraction and proliferation of smooth muscle, edema, eosinophil migration and damage to the mucus layer in the lung. This response is mediated via a G-protein that activates a phosphatidylinositol-calcium second messenger system. The rank order of affinities for the leukotrienes is LTD4 &gt;&gt; LTE4 = LTC4 &gt;&gt; LTB4. The polypeptide is Cysteinyl leukotriene receptor 1 (CYSLTR1) (Homo sapiens (Human)).